Reading from the N-terminus, the 153-residue chain is Small ribosomal subunit protein eS19 (153 aa).

Disordered stretches follow at residues 77 to 99 and 113 to 139; these read YGTSKQGTTRYRVRPHQKTKGSG and GYVETSENDGRRVTGDGRSLLDDTAGD. The segment covering 120-133 has biased composition (basic and acidic residues); that stretch reads NDGRRVTGDGRSLL.

It belongs to the eukaryotic ribosomal protein eS19 family. In terms of assembly, part of the 30S ribosomal subunit.

Functionally, may be involved in maturation of the 30S ribosomal subunit. This is Small ribosomal subunit protein eS19 from Haloarcula marismortui (strain ATCC 43049 / DSM 3752 / JCM 8966 / VKM B-1809) (Halobacterium marismortui).